Reading from the N-terminus, the 619-residue chain is ATP-dependent zinc metalloprotease FtsH 1 (619 aa).

The Cytoplasmic segment spans residues 1-8 (MADEKRPA). Residues 9-29 (SRAWLGYLLIAVGILVLSGIV) form a helical membrane-spanning segment. The Periplasmic portion of the chain corresponds to 30 to 108 (RSRGRPLVPY…RIEAKSPQTS (79 aa)). Residues 109–129 (VWMQVAIWMLPLVLINAAFFM) form a helical membrane-spanning segment. Residues 130–619 (MLRRAGQGAG…KIAVGPPSAA (490 aa)) lie on the Cytoplasmic side of the membrane. 203–210 (GPPGTGKT) contributes to the ATP binding site. Histidine 426 contributes to the Zn(2+) binding site. The active site involves glutamate 427. Residues histidine 430 and aspartate 503 each coordinate Zn(2+).

This sequence in the central section; belongs to the AAA ATPase family. It in the C-terminal section; belongs to the peptidase M41 family. As to quaternary structure, homohexamer. Zn(2+) serves as cofactor.

Its subcellular location is the cell inner membrane. Acts as a processive, ATP-dependent zinc metallopeptidase for both cytoplasmic and membrane proteins. Plays a role in the quality control of integral membrane proteins. The polypeptide is ATP-dependent zinc metalloprotease FtsH 1 (Sorangium cellulosum (strain So ce56) (Polyangium cellulosum (strain So ce56))).